The following is a 291-amino-acid chain: Small ribosomal subunit protein uS2 (291 aa).

Residues 255-291 (AGAATGEWSEAQGAQWETGTGAPAADWAAEPAKESSW) form a disordered region.

The protein belongs to the universal ribosomal protein uS2 family. Component of the small ribosomal subunit. Mature ribosomes consist of a small (40S) and a large (60S) subunit. The 40S subunit contains about 33 different proteins and 1 molecule of RNA (18S). The 60S subunit contains about 49 different proteins and 3 molecules of RNA (25S, 5.8S and 5S). Interacts with RPS21.

The protein localises to the cytoplasm. Functionally, required for the assembly and/or stability of the 40S ribosomal subunit. Required for the processing of the 20S rRNA-precursor to mature 18S rRNA in a late step of the maturation of 40S ribosomal subunits. This chain is Small ribosomal subunit protein uS2, found in Podospora anserina (strain S / ATCC MYA-4624 / DSM 980 / FGSC 10383) (Pleurage anserina).